Here is a 199-residue protein sequence, read N- to C-terminus: uncharacterized protein (199 aa).

Positions 1–23 (MSARAPKELRLALPPCLLNRTFA) are cleaved as a signal peptide. 2 N-linked (GlcNAc...) asparagine glycosylation sites follow: asparagine 19 and asparagine 26. The Extracellular segment spans residues 24–60 (SHNASGGSSAGLRSSGAGGGTCITQVGQQLFQSFSST). Residues 61 to 81 (LVLIVLVTLIFCLLVLSLSTF) traverse the membrane as a helical segment. Topologically, residues 82-199 (HIHKRRMKKR…EGLLQTVVLS (118 aa)) are cytoplasmic. Residues 93 to 190 (MQRAQEEYER…ASSCLDTPGE (98 aa)) are disordered. Basic and acidic residues-rich tracts occupy residues 95–106 (RAQEEYERDHCS) and 124–135 (HGKETRLERQPR). Residues 147–163 (SSSSSSSSSPGLLCQGP) show a composition bias toward low complexity. Residues 164-176 (CAPPPPLPAPTPQ) are compositionally biased toward pro residues.

The protein resides in the membrane. This is an uncharacterized protein from Mus musculus (Mouse).